The sequence spans 217 residues: Phosphatidylserine decarboxylase proenzyme (217 aa).

The active-site Schiff-base intermediate with substrate; via pyruvic acid is the Ser183. Position 183 is a pyruvic acid (Ser); by autocatalysis (Ser183).

The protein belongs to the phosphatidylserine decarboxylase family. PSD-A subfamily. As to quaternary structure, heterodimer of a large membrane-associated beta subunit and a small pyruvoyl-containing alpha subunit. Pyruvate serves as cofactor. Is synthesized initially as an inactive proenzyme. Formation of the active enzyme involves a self-maturation process in which the active site pyruvoyl group is generated from an internal serine residue via an autocatalytic post-translational modification. Two non-identical subunits are generated from the proenzyme in this reaction, and the pyruvate is formed at the N-terminus of the alpha chain, which is derived from the carboxyl end of the proenzyme. The post-translation cleavage follows an unusual pathway, termed non-hydrolytic serinolysis, in which the side chain hydroxyl group of the serine supplies its oxygen atom to form the C-terminus of the beta chain, while the remainder of the serine residue undergoes an oxidative deamination to produce ammonia and the pyruvoyl prosthetic group on the alpha chain.

Its subcellular location is the cell membrane. The catalysed reaction is a 1,2-diacyl-sn-glycero-3-phospho-L-serine + H(+) = a 1,2-diacyl-sn-glycero-3-phosphoethanolamine + CO2. It participates in phospholipid metabolism; phosphatidylethanolamine biosynthesis; phosphatidylethanolamine from CDP-diacylglycerol: step 2/2. Catalyzes the formation of phosphatidylethanolamine (PtdEtn) from phosphatidylserine (PtdSer). The sequence is that of Phosphatidylserine decarboxylase proenzyme from Cupriavidus metallidurans (strain ATCC 43123 / DSM 2839 / NBRC 102507 / CH34) (Ralstonia metallidurans).